Here is a 333-residue protein sequence, read N- to C-terminus: MSKARVYADVNVLRPKEYWDYEALTVQWGEQDDYEVVRKVGRGKYSEVFEGINVNNNEKCIIKILKPVKKKKIKREIKILQNLCGGPNIVKLLDIVRDQHSKTPSLIFEYVNNTDFKVLYPTLTDYDIRYYIYELLKALDYCHSQGIMHRDVKPHNVMIDHELRKLRLIDWGLAEFYHPGKEYNVRVASRYFKGPELLVDLQDYDYSLDMWSLGCMFAGMIFRKEPFFYGHDNHDQLVKIAKVLGTEALNAYLNKYHIELDPQLEALVGRHSRKPWSKFINADNQHLVSPEAVDFLDKLLRYDHQDRLTAREAMAHPYFLQVRAAENSRARPQ.

The Protein kinase domain maps to 34–319 (YEVVRKVGRG…AREAMAHPYF (286 aa)). ATP-binding positions include 40–48 (VGRGKYSEV) and Lys63. The Proton acceptor role is filled by Asp151.

This sequence belongs to the protein kinase superfamily. Ser/Thr protein kinase family. CK2 subfamily. Monomer. Autophosphorylated.

It is found in the cytoplasm. It catalyses the reaction L-seryl-[protein] + ATP = O-phospho-L-seryl-[protein] + ADP + H(+). It carries out the reaction L-threonyl-[protein] + ATP = O-phospho-L-threonyl-[protein] + ADP + H(+). Its function is as follows. Casein kinases are operationally defined by their preferential utilization of acidic proteins such as caseins as substrates. It can phosphorylate a large number of proteins. Involved in photoperiod sensitivity (PS). Increases days-to-heading under natural day (ND) and long day (LD) conditions, but not under short day (SD) conditions. The chain is Casein kinase II subunit alpha-2 from Oryza sativa subsp. indica (Rice).